The sequence spans 336 residues: Holliday junction branch migration complex subunit RuvB (336 aa).

A large ATPase domain (RuvB-L) region spans residues 1-180 (MRRTGIRLSW…FGIVEHLEYY (180 aa)). Residues L18, R19, G60, K63, T64, T65, 127–129 (EDF), R170, Y180, and R217 each bind ATP. T64 is a binding site for Mg(2+). Residues 181–251 (TPEELAQGVM…RALEALAALG (71 aa)) form a small ATPAse domain (RuvB-S) region. A head domain (RuvB-H) region spans residues 254 to 336 (ELGLEKRDRE…PPPVGPLLEP (83 aa)). DNA is bound by residues R309 and R314.

This sequence belongs to the RuvB family. In terms of assembly, homohexamer. Forms an RuvA(8)-RuvB(12)-Holliday junction (HJ) complex. HJ DNA is sandwiched between 2 RuvA tetramers; dsDNA enters through RuvA and exits via RuvB. An RuvB hexamer assembles on each DNA strand where it exits the tetramer. Each RuvB hexamer is contacted by two RuvA subunits (via domain III) on 2 adjacent RuvB subunits; this complex drives branch migration. In the full resolvosome a probable DNA-RuvA(4)-RuvB(12)-RuvC(2) complex forms which resolves the HJ.

It is found in the cytoplasm. The catalysed reaction is ATP + H2O = ADP + phosphate + H(+). Functionally, the RuvA-RuvB-RuvC complex processes Holliday junction (HJ) DNA during genetic recombination and DNA repair, while the RuvA-RuvB complex plays an important role in the rescue of blocked DNA replication forks via replication fork reversal (RFR). RuvA specifically binds to HJ cruciform DNA, conferring on it an open structure. The RuvB hexamer acts as an ATP-dependent pump, pulling dsDNA into and through the RuvAB complex. RuvB forms 2 homohexamers on either side of HJ DNA bound by 1 or 2 RuvA tetramers; 4 subunits per hexamer contact DNA at a time. Coordinated motions by a converter formed by DNA-disengaged RuvB subunits stimulates ATP hydrolysis and nucleotide exchange. Immobilization of the converter enables RuvB to convert the ATP-contained energy into a lever motion, pulling 2 nucleotides of DNA out of the RuvA tetramer per ATP hydrolyzed, thus driving DNA branch migration. The RuvB motors rotate together with the DNA substrate, which together with the progressing nucleotide cycle form the mechanistic basis for DNA recombination by continuous HJ branch migration. Branch migration allows RuvC to scan DNA until it finds its consensus sequence, where it cleaves and resolves cruciform DNA. This is Holliday junction branch migration complex subunit RuvB from Thermus thermophilus (strain ATCC BAA-163 / DSM 7039 / HB27).